The primary structure comprises 256 residues: UPF0280 protein MTH_727 (256 aa).

It belongs to the UPF0280 family.

The polypeptide is UPF0280 protein MTH_727 (Methanothermobacter thermautotrophicus (strain ATCC 29096 / DSM 1053 / JCM 10044 / NBRC 100330 / Delta H) (Methanobacterium thermoautotrophicum)).